The following is a 255-amino-acid chain: tRNA (guanine-N(7)-)-methyltransferase (255 aa).

The tract at residues 1–37 (MTAAASDPHNPRSSADDTASPRCESGQGSFFGRRKGH) is disordered. S-adenosyl-L-methionine-binding residues include E80, E105, D132, and D154. Residue D154 is part of the active site. Residues K158 and D190 each contribute to the substrate site.

It belongs to the class I-like SAM-binding methyltransferase superfamily. TrmB family.

The enzyme catalyses guanosine(46) in tRNA + S-adenosyl-L-methionine = N(7)-methylguanosine(46) in tRNA + S-adenosyl-L-homocysteine. It participates in tRNA modification; N(7)-methylguanine-tRNA biosynthesis. Its function is as follows. Catalyzes the formation of N(7)-methylguanine at position 46 (m7G46) in tRNA. The protein is tRNA (guanine-N(7)-)-methyltransferase of Nitrobacter hamburgensis (strain DSM 10229 / NCIMB 13809 / X14).